Consider the following 398-residue polypeptide: MSKLVLVLNCGSSSLKFAVVDAENGAEHLSGLAECLHLPEARIKWKLDGKHEAQLGNGAAHEEALAFMVETILASKPELSENLAAIGHRVVHGGEQFTQSALITDEVLKGIEDCATLAPLHNPAHIIGIKAAQKSFPALKNVAVFDTAFHQTMPEEAYLYALPYNLYKEHGIRRYGMHGTSHLFITREVASLLNKPVEEVNIINCHLGNGASVCAVKNGQSVDTSMGLTPLEGLVMGTRCGDIDPAIIFHLHDTLGYSVEKINTMLTKESGLAGLTEVTSDCRFVEDNYGQKEEATRAMDVFCHRLAKYVAGYTATLEGRLDAITFTGGIGENSAPIREMVLNRLGIFGIEVDSEANLKARFGGEGVITTANSRIPAMVISTNEELVIAEDTARLAGL.

Residue Asn9 coordinates Mg(2+). Lys16 provides a ligand contact to ATP. Arg89 contacts substrate. The active-site Proton donor/acceptor is Asp146. Residues 206–210, 281–283, and 329–333 contribute to the ATP site; these read HLGNG, DCR, and GIGEN. A Mg(2+)-binding site is contributed by Glu384.

It belongs to the acetokinase family. In terms of assembly, homodimer. The cofactor is Mg(2+). Mn(2+) is required as a cofactor.

The protein resides in the cytoplasm. The catalysed reaction is acetate + ATP = acetyl phosphate + ADP. It functions in the pathway metabolic intermediate biosynthesis; acetyl-CoA biosynthesis; acetyl-CoA from acetate: step 1/2. Its function is as follows. Catalyzes the formation of acetyl phosphate from acetate and ATP. Can also catalyze the reverse reaction. In Vibrio vulnificus (strain CMCP6), this protein is Acetate kinase 1.